The chain runs to 426 residues: Histidine--tRNA ligase (426 aa).

Belongs to the class-II aminoacyl-tRNA synthetase family. In terms of assembly, homodimer.

The protein resides in the cytoplasm. The catalysed reaction is tRNA(His) + L-histidine + ATP = L-histidyl-tRNA(His) + AMP + diphosphate + H(+). The chain is Histidine--tRNA ligase from Pseudoalteromonas translucida (strain TAC 125).